A 461-amino-acid chain; its full sequence is Protein YIG1 (461 aa).

Positions 58-80 are disordered; sequence SNVGEDGGDVGNYSEEDDDGDEE. Positions 71–80 are enriched in acidic residues; the sequence is SEEDDDGDEE.

The protein localises to the cytoplasm. Its subcellular location is the nucleus. In terms of biological role, involved in the regulation of anaerobiotic glycerol metabolism. The protein is Protein YIG1 (YIG1) of Saccharomyces cerevisiae (strain ATCC 204508 / S288c) (Baker's yeast).